Here is a 320-residue protein sequence, read N- to C-terminus: MQTKNTFSWIKKEIIRSISVSLMIYIIARTSISNAYPIFAQQGYENPREATGRIVCANCHLANKPVDIEVPQAVLPDTVFEAVVRIPYDMQVKQVLANGKRGGLNVGAVLILPEGFELAPPDRISPEMKEKIGNLSFQSYRPNKKNILVIGPVSGQKYSEVTFPILSPDPATNKDVHFLKYPIYVGGNRGRGQIYPDGSKSNNTVYNATAAGVVSKIIRKEKGGYEITISDASDERQVVDIIPPGPELLVSEGESIKLDQPLTSNPNVGGFGQGDAEIVLQDPFRVQGLLFFLASVILAQIFLVLKKKQFEKVQLSEMNF.

Residues 1–35 form the signal peptide; the sequence is MQTKNTFSWIKKEIIRSISVSLMIYIIARTSISNA. 4 residues coordinate heme: Tyr36, Cys56, Cys59, and His60. The helical transmembrane segment at 286–306 threads the bilayer; the sequence is VQGLLFFLASVILAQIFLVLK.

It belongs to the cytochrome f family. As to quaternary structure, the 4 large subunits of the cytochrome b6-f complex are cytochrome b6, subunit IV (17 kDa polypeptide, petD), cytochrome f and the Rieske protein, while the 4 small subunits are PetG, PetL, PetM and PetN. The complex functions as a dimer. Heme serves as cofactor.

The protein resides in the plastid. The protein localises to the chloroplast thylakoid membrane. Functionally, component of the cytochrome b6-f complex, which mediates electron transfer between photosystem II (PSII) and photosystem I (PSI), cyclic electron flow around PSI, and state transitions. This chain is Cytochrome f, found in Eucalyptus globulus subsp. globulus (Tasmanian blue gum).